The primary structure comprises 261 residues: uncharacterized protein (261 aa).

3 helical membrane-spanning segments follow: residues 15–35 (WYSVGLIFFSFIPIYYSIIVC), 87–107 (VYLIVLYIILIIHFGFEIRNA), and 131–151 (LLLYFQNLLLLPYICGGYFLI). Over residues 234 to 246 (LEEKKAKRRQNAE) the composition is skewed to basic and acidic residues. Residues 234-261 (LEEKKAKRRQNAERRKKRREIAMEQREQ) form a disordered region.

It localises to the membrane. This is an uncharacterized protein from Caenorhabditis elegans.